The sequence spans 761 residues: Xaa-Pro dipeptidyl-peptidase (761 aa).

Catalysis depends on charge relay system residues S347, D467, and H497.

Belongs to the peptidase S15 family. As to quaternary structure, homodimer.

The protein localises to the cytoplasm. The enzyme catalyses Hydrolyzes Xaa-Pro-|- bonds to release unblocked, N-terminal dipeptides from substrates including Ala-Pro-|-p-nitroanilide and (sequentially) Tyr-Pro-|-Phe-Pro-|-Gly-Pro-|-Ile.. Functionally, removes N-terminal dipeptides sequentially from polypeptides having unsubstituted N-termini provided that the penultimate residue is proline. This is Xaa-Pro dipeptidyl-peptidase from Streptococcus agalactiae serotype III (strain NEM316).